Reading from the N-terminus, the 315-residue chain is tRNA dimethylallyltransferase (315 aa).

ATP is bound at residue 9 to 16 (GPTASGKT). Position 11-16 (11-16 (TASGKT)) interacts with substrate. Interaction with substrate tRNA stretches follow at residues 34–37 (DSLL) and 158–162 (QRIQR).

The protein belongs to the IPP transferase family. In terms of assembly, monomer. The cofactor is Mg(2+).

The enzyme catalyses adenosine(37) in tRNA + dimethylallyl diphosphate = N(6)-dimethylallyladenosine(37) in tRNA + diphosphate. In terms of biological role, catalyzes the transfer of a dimethylallyl group onto the adenine at position 37 in tRNAs that read codons beginning with uridine, leading to the formation of N6-(dimethylallyl)adenosine (i(6)A). This chain is tRNA dimethylallyltransferase, found in Acidithiobacillus ferrooxidans (strain ATCC 53993 / BNL-5-31) (Leptospirillum ferrooxidans (ATCC 53993)).